The chain runs to 594 residues: Elongation factor 4 (594 aa).

The 183-residue stretch at 2 to 184 (KNIRNFSIIA…TIVAKVPAPE (183 aa)) folds into the tr-type G domain. Residues 14–19 (DHGKST) and 131–134 (NKID) contribute to the GTP site.

This sequence belongs to the TRAFAC class translation factor GTPase superfamily. Classic translation factor GTPase family. LepA subfamily.

Its subcellular location is the cell inner membrane. It catalyses the reaction GTP + H2O = GDP + phosphate + H(+). Functionally, required for accurate and efficient protein synthesis under certain stress conditions. May act as a fidelity factor of the translation reaction, by catalyzing a one-codon backward translocation of tRNAs on improperly translocated ribosomes. Back-translocation proceeds from a post-translocation (POST) complex to a pre-translocation (PRE) complex, thus giving elongation factor G a second chance to translocate the tRNAs correctly. Binds to ribosomes in a GTP-dependent manner. The chain is Elongation factor 4 from Francisella tularensis subsp. tularensis (strain WY96-3418).